A 382-amino-acid chain; its full sequence is Cell division protein DivIB (382 aa).

The Cytoplasmic portion of the chain corresponds to 1–103 (MAKDKEKQSD…SATQIAFQKS (103 aa)). Basic and acidic residues-rich tracts occupy residues 36–49 (EKKLKEKLLSDKKA) and 60–70 (VELKTDEKTDS). A disordered region spans residues 36-92 (EKKLKEKLLSDKKAQQQAQNASEAVELKTDEKTDSQEIESETTSKPKKTKKVRQPKE). A helical transmembrane segment spans residues 104 to 124 (LPVLLGALLLMAVSIFMITPY). In terms of domain architecture, POTRA spans 125-196 (SKKKEFSVRG…NHFLFNVIEF (72 aa)). The Extracellular portion of the chain corresponds to 125–382 (SKKKEFSVRG…PETVLEQAHG (258 aa)). Residues 322–382 (QEIENQPEVP…PETVLEQAHG (61 aa)) form a disordered region. Over residues 338-352 (AADKEGDKPGEHQEQ) the composition is skewed to basic and acidic residues.

This sequence belongs to the FtsQ/DivIB family. DivIB subfamily.

It localises to the cell membrane. Functionally, cell division protein that may be involved in stabilizing or promoting the assembly of the division complex. This chain is Cell division protein DivIB, found in Streptococcus pyogenes serotype M2 (strain MGAS10270).